A 331-amino-acid polypeptide reads, in one-letter code: GTP 3',8-cyclase (331 aa).

The region spanning 1–231 (MNAVDYLRIS…DGQVQGNGPA (231 aa)) is the Radical SAM core domain. Residue Arg-8 coordinates GTP. 2 residues coordinate [4Fe-4S] cluster: Cys-15 and Cys-19. Tyr-21 lines the S-adenosyl-L-methionine pocket. Residue Cys-22 coordinates [4Fe-4S] cluster. Arg-60 contributes to the GTP binding site. Gly-64 contacts S-adenosyl-L-methionine. Thr-91 provides a ligand contact to GTP. Residue Ser-115 coordinates S-adenosyl-L-methionine. Residue Lys-157 participates in GTP binding. Met-191 is a binding site for S-adenosyl-L-methionine. [4Fe-4S] cluster-binding residues include Cys-254 and Cys-257. 259-261 (RMR) is a GTP binding site. A [4Fe-4S] cluster-binding site is contributed by Cys-271.

This sequence belongs to the radical SAM superfamily. MoaA family. As to quaternary structure, monomer and homodimer. [4Fe-4S] cluster serves as cofactor.

The enzyme catalyses GTP + AH2 + S-adenosyl-L-methionine = (8S)-3',8-cyclo-7,8-dihydroguanosine 5'-triphosphate + 5'-deoxyadenosine + L-methionine + A + H(+). It functions in the pathway cofactor biosynthesis; molybdopterin biosynthesis. Functionally, catalyzes the cyclization of GTP to (8S)-3',8-cyclo-7,8-dihydroguanosine 5'-triphosphate. In Acaryochloris marina (strain MBIC 11017), this protein is GTP 3',8-cyclase.